A 473-amino-acid polypeptide reads, in one-letter code: ATP synthase subunit beta (473 aa).

158-165 (GGAGVGKT) contributes to the ATP binding site.

The protein belongs to the ATPase alpha/beta chains family. In terms of assembly, F-type ATPases have 2 components, CF(1) - the catalytic core - and CF(0) - the membrane proton channel. CF(1) has five subunits: alpha(3), beta(3), gamma(1), delta(1), epsilon(1). CF(0) has three main subunits: a(1), b(2) and c(9-12). The alpha and beta chains form an alternating ring which encloses part of the gamma chain. CF(1) is attached to CF(0) by a central stalk formed by the gamma and epsilon chains, while a peripheral stalk is formed by the delta and b chains.

Its subcellular location is the cell membrane. The enzyme catalyses ATP + H2O + 4 H(+)(in) = ADP + phosphate + 5 H(+)(out). In terms of biological role, produces ATP from ADP in the presence of a proton gradient across the membrane. The catalytic sites are hosted primarily by the beta subunits. The chain is ATP synthase subunit beta from Bacillus caldotenax.